Reading from the N-terminus, the 276-residue chain is Putative non-heme chloroperoxidase (276 aa).

The region spanning 26-263 is the AB hydrolase-1 domain; sequence PIVLIHGFPL…GGPHAINWTH (238 aa). Catalysis depends on residues serine 99, aspartate 228, and histidine 257.

The protein belongs to the AB hydrolase superfamily. Bacterial non-heme haloperoxidase / perhydrolase family.

This Synechocystis sp. (strain ATCC 27184 / PCC 6803 / Kazusa) protein is Putative non-heme chloroperoxidase.